A 272-amino-acid chain; its full sequence is NADPH-dependent 7-cyano-7-deazaguanine reductase (272 aa).

82–84 (IES) contributes to the substrate binding site. 84-85 (SK) is a binding site for NADPH. The active-site Thioimide intermediate is the Cys178. The active-site Proton donor is the Asp185. 217–218 (HE) contributes to the substrate binding site. An NADPH-binding site is contributed by 246–247 (RG).

The protein belongs to the GTP cyclohydrolase I family. QueF type 2 subfamily. Homodimer.

It is found in the cytoplasm. It carries out the reaction 7-aminomethyl-7-carbaguanine + 2 NADP(+) = 7-cyano-7-deazaguanine + 2 NADPH + 3 H(+). It participates in tRNA modification; tRNA-queuosine biosynthesis. Functionally, catalyzes the NADPH-dependent reduction of 7-cyano-7-deazaguanine (preQ0) to 7-aminomethyl-7-deazaguanine (preQ1). The polypeptide is NADPH-dependent 7-cyano-7-deazaguanine reductase (Stenotrophomonas maltophilia (strain R551-3)).